We begin with the raw amino-acid sequence, 188 residues long: NADH-quinone oxidoreductase subunit I 2 (188 aa).

4Fe-4S ferredoxin-type domains follow at residues 56–88 and 98–127; these read HFLK…VVPY and AKFE…LGQQ. Residues Cys-68, Cys-71, Cys-74, Cys-78, Cys-107, Cys-110, Cys-113, and Cys-117 each coordinate [4Fe-4S] cluster.

It belongs to the complex I 23 kDa subunit family. NDH-1 is composed of 14 different subunits. Subunits NuoA, H, J, K, L, M, N constitute the membrane sector of the complex. The cofactor is [4Fe-4S] cluster.

It is found in the cell inner membrane. It carries out the reaction a quinone + NADH + 5 H(+)(in) = a quinol + NAD(+) + 4 H(+)(out). Its function is as follows. NDH-1 shuttles electrons from NADH, via FMN and iron-sulfur (Fe-S) centers, to quinones in the respiratory chain. The immediate electron acceptor for the enzyme in this species is believed to be ubiquinone. Couples the redox reaction to proton translocation (for every two electrons transferred, four hydrogen ions are translocated across the cytoplasmic membrane), and thus conserves the redox energy in a proton gradient. This Rhizobium meliloti (strain 1021) (Ensifer meliloti) protein is NADH-quinone oxidoreductase subunit I 2.